A 421-amino-acid polypeptide reads, in one-letter code: ATP-dependent RNA helicase RhlB (421 aa).

The short motif at 9 to 37 is the Q motif element; the sequence is THFADLPINEQVVKALSAANFSHCTPIQA. The Helicase ATP-binding domain occupies 40–216; sequence LPPLLEGNDI…YEHMDNPTHV (177 aa). 53-60 serves as a coordination point for ATP; that stretch reads AQTGTGKT. A DEAD box motif is present at residues 162-165; sequence DEAD. The region spanning 240–387 is the Helicase C-terminal domain; sequence KMALLLSLME…VTEYQADALL (148 aa). The disordered stretch occupies residues 389-421; that stretch reads DVTPPKPRHKKRMQNGRNPQKRQSSGSRNRRKP. Polar residues predominate over residues 403–415; it reads NGRNPQKRQSSGS.

It belongs to the DEAD box helicase family. RhlB subfamily. Component of the RNA degradosome, which is a multiprotein complex involved in RNA processing and mRNA degradation.

Its subcellular location is the cytoplasm. The catalysed reaction is ATP + H2O = ADP + phosphate + H(+). Its function is as follows. DEAD-box RNA helicase involved in RNA degradation. Has RNA-dependent ATPase activity and unwinds double-stranded RNA. The polypeptide is ATP-dependent RNA helicase RhlB (Pseudoalteromonas atlantica (strain T6c / ATCC BAA-1087)).